A 355-amino-acid chain; its full sequence is Probable butyrate kinase (355 aa).

This sequence belongs to the acetokinase family.

It is found in the cytoplasm. It catalyses the reaction butanoate + ATP = butanoyl phosphate + ADP. The protein is Probable butyrate kinase of Clostridium botulinum (strain Alaska E43 / Type E3).